Here is a 220-residue protein sequence, read N- to C-terminus: Type II restriction enzyme NspV (220 aa).

It carries out the reaction Endonucleolytic cleavage of DNA to give specific double-stranded fragments with terminal 5'-phosphates.. Its function is as follows. A P subtype restriction enzyme that recognizes the double-stranded sequence 5'-TTCGAA-3' and cleaves after T-2. This chain is Type II restriction enzyme NspV, found in Nostoc sp. (strain ATCC 29411 / PCC 7524).